The sequence spans 1304 residues: DNA-directed RNA polymerase subunit beta' (1304 aa).

Zn(2+) contacts are provided by Cys60, Cys62, Cys75, and Cys78. The Mg(2+) site is built by Asp541, Asp543, and Asp545. Cys887, Cys963, Cys970, and Cys973 together coordinate Zn(2+).

The protein belongs to the RNA polymerase beta' chain family. As to quaternary structure, the RNAP catalytic core consists of 2 alpha, 1 beta, 1 beta' and 1 omega subunit. When a sigma factor is associated with the core the holoenzyme is formed, which can initiate transcription. It depends on Mg(2+) as a cofactor. Requires Zn(2+) as cofactor.

The catalysed reaction is RNA(n) + a ribonucleoside 5'-triphosphate = RNA(n+1) + diphosphate. Functionally, DNA-dependent RNA polymerase catalyzes the transcription of DNA into RNA using the four ribonucleoside triphosphates as substrates. This Acidothermus cellulolyticus (strain ATCC 43068 / DSM 8971 / 11B) protein is DNA-directed RNA polymerase subunit beta'.